The sequence spans 215 residues: ATP phosphoribosyltransferase (215 aa).

It belongs to the ATP phosphoribosyltransferase family. Short subfamily. In terms of assembly, heteromultimer composed of HisG and HisZ subunits.

The protein resides in the cytoplasm. The enzyme catalyses 1-(5-phospho-beta-D-ribosyl)-ATP + diphosphate = 5-phospho-alpha-D-ribose 1-diphosphate + ATP. It functions in the pathway amino-acid biosynthesis; L-histidine biosynthesis; L-histidine from 5-phospho-alpha-D-ribose 1-diphosphate: step 1/9. Its function is as follows. Catalyzes the condensation of ATP and 5-phosphoribose 1-diphosphate to form N'-(5'-phosphoribosyl)-ATP (PR-ATP). Has a crucial role in the pathway because the rate of histidine biosynthesis seems to be controlled primarily by regulation of HisG enzymatic activity. The sequence is that of ATP phosphoribosyltransferase from Acidithiobacillus ferrooxidans (strain ATCC 23270 / DSM 14882 / CIP 104768 / NCIMB 8455) (Ferrobacillus ferrooxidans (strain ATCC 23270)).